Here is a 192-residue protein sequence, read N- to C-terminus: Putative BTB/POZ domain-containing protein At4g04090 (192 aa).

One can recognise a BTB domain in the interval Val-23 to Glu-96.

The protein operates within protein modification; protein ubiquitination. May act as a substrate-specific adapter of an E3 ubiquitin-protein ligase complex (CUL3-RBX1-BTB) which mediates the ubiquitination and subsequent proteasomal degradation of target proteins. This Arabidopsis thaliana (Mouse-ear cress) protein is Putative BTB/POZ domain-containing protein At4g04090.